The chain runs to 360 residues: Malonyl CoA-acyl carrier protein transacylase, mitochondrial (360 aa).

The N-terminal 24 residues, 1-24 (MKLLTFPGQGTSISISILKAIIRN), are a transit peptide targeting the mitochondrion. Catalysis depends on residues S105 and H235.

This sequence belongs to the FabD family.

The protein localises to the mitochondrion. It carries out the reaction holo-[ACP] + malonyl-CoA = malonyl-[ACP] + CoA. It participates in lipid metabolism; fatty acid biosynthesis. In terms of biological role, involved in biosynthesis of fatty acids in mitochondria. In Saccharomyces cerevisiae (strain ATCC 204508 / S288c) (Baker's yeast), this protein is Malonyl CoA-acyl carrier protein transacylase, mitochondrial (MCT1).